The primary structure comprises 884 residues: Alanine--tRNA ligase (884 aa).

Zn(2+) is bound by residues His-574, His-578, Cys-675, and His-679.

Belongs to the class-II aminoacyl-tRNA synthetase family. The cofactor is Zn(2+).

It is found in the cytoplasm. The enzyme catalyses tRNA(Ala) + L-alanine + ATP = L-alanyl-tRNA(Ala) + AMP + diphosphate. In terms of biological role, catalyzes the attachment of alanine to tRNA(Ala) in a two-step reaction: alanine is first activated by ATP to form Ala-AMP and then transferred to the acceptor end of tRNA(Ala). Also edits incorrectly charged Ser-tRNA(Ala) and Gly-tRNA(Ala) via its editing domain. This is Alanine--tRNA ligase from Ralstonia nicotianae (strain ATCC BAA-1114 / GMI1000) (Ralstonia solanacearum).